A 353-amino-acid chain; its full sequence is Type 2 DNA topoisomerase 6 subunit A (353 aa).

The Topo IIA-type catalytic domain occupies 2-138 (NRREIAINKL…LGLMPEEDGA (137 aa)). The O-(5'-phospho-DNA)-tyrosine intermediate role is filled by Y96. Residues E186 and D238 each coordinate Mg(2+).

Belongs to the TOP6A family. Homodimer. Heterotetramer of two Top6A and two Top6B chains. The cofactor is Mg(2+).

The enzyme catalyses ATP-dependent breakage, passage and rejoining of double-stranded DNA.. Functionally, relaxes both positive and negative superturns and exhibits a strong decatenase activity. This is Type 2 DNA topoisomerase 6 subunit A from Methanothermobacter thermautotrophicus (strain ATCC 29096 / DSM 1053 / JCM 10044 / NBRC 100330 / Delta H) (Methanobacterium thermoautotrophicum).